Reading from the N-terminus, the 128-residue chain is Protein ripply2 (128 aa).

The segment at methionine 1–proline 63 is disordered. Low complexity predominate over residues glycine 9 to glycine 22. A WRPW motif motif is present at residues tryptophan 37–tryptophan 40. The segment at histidine 77–tyrosine 112 is ripply homology domain.

This sequence belongs to the ripply family.

The protein localises to the nucleus. Its function is as follows. Plays a role in somitogenesis. Required for somite segregation and establishment of rostrocaudal polarity in somites. The protein is Protein ripply2 (RIPPLY2) of Homo sapiens (Human).